We begin with the raw amino-acid sequence, 659 residues long: QWRF motif-containing protein 2 (659 aa).

Disordered stretches follow at residues 1 to 125, 157 to 221, 291 to 317, 340 to 359, and 371 to 429; these read MVAA…SVTV, SKKK…LDCG, DTDSVSSGSTNGVQECGSGVNGEISKS, RLQDPGSPLSSSPGLKTSSI, and SDAV…NAYN. Residues 42-72 are compositionally biased toward low complexity; the sequence is SPSPSHSVSSTTTTTTTTTTTTSSSSSSSSS. Residues 90–102 show a composition bias toward polar residues; it reads RSTTNSASNSIKT. Residues 172–190 show a composition bias toward basic and acidic residues; the sequence is STPERRRSTPVRDQRENSK. 2 stretches are compositionally biased toward polar residues: residues 206 to 216 and 291 to 303; these read SESVVPNSLSR and DTDSVSSGSTNGV. Low complexity-rich tracts occupy residues 345 to 359 and 401 to 418; these read GSPLSSSPGLKTSSI and ATTTSSPARALSSPSRAR. The QWRF motif signature appears at 468–471; it reads QWRF.

This sequence belongs to the QWRF family.

This chain is QWRF motif-containing protein 2 (QWRF2), found in Arabidopsis thaliana (Mouse-ear cress).